Consider the following 160-residue polypeptide: Peripheral myelin protein 22 (160 aa).

A topological domain (cytoplasmic) is located at residue M1. A helical transmembrane segment spans residues 2 to 31 (LLLLLSIIVLHVAVLVLLFVSTIVSQWIVG). Over 32 to 64 (NGHATDLWQNCSTSSSGNVHHCFSSSPNEWLQS) the chain is Extracellular. Residue N41 is glycosylated (N-linked (GlcNAc...) asparagine). A helical membrane pass occupies residues 65–91 (VQATMILSIIFSILSLFLFFCQLFTLT). Topologically, residues 92-95 (KGGR) are cytoplasmic. The chain crosses the membrane as a helical span at residues 96–119 (FYITGIFQILAGLCVMSAAAIYTV). Residues 120–133 (RHPEWHLNSDYSYG) are Extracellular-facing. The helical transmembrane segment at 134-156 (FAYILAWVAFPLALLSGVIYVIL) threads the bilayer. At 157 to 160 (RKRE) the chain is on the cytoplasmic side.

It belongs to the PMP-22/EMP/MP20 family. Ubiquitinated by the DCX(DCAF13) E3 ubiquitin ligase complex, leading to its degradation.

It localises to the cell membrane. In terms of biological role, might be involved in growth regulation, and in myelinization in the peripheral nervous system. The chain is Peripheral myelin protein 22 (PMP22) from Homo sapiens (Human).